A 133-amino-acid chain; its full sequence is DNA-binding protein StpA (133 aa).

Positions 81–115 (AMPRSAKKRQPRPAKYRFTDFNGEEKTWTGQGRTP) are disordered. The segment covering 85 to 95 (SAKKRQPRPAK) has biased composition (basic residues). A DNA-binding region spans residues 111-116 (QGRTPK).

This sequence belongs to the histone-like protein H-NS family. Forms homodimers, can interact with H-NS.

It localises to the cytoplasm. It is found in the nucleoid. Its function is as follows. A DNA-binding protein that acts in a fashion similar to H-NS, repressing gene transcription. A subset of H-NS/StpA-regulated genes require auxillary proteins for repression; these auxillary proteins (Hha and other similar proteins) may also modulate oligomerization of the H-NS/StpA complex. The polypeptide is DNA-binding protein StpA (stpA) (Salmonella typhi).